The chain runs to 308 residues: Lipoyl synthase (308 aa).

Cysteine 51, cysteine 56, cysteine 62, cysteine 77, cysteine 81, cysteine 84, and serine 290 together coordinate [4Fe-4S] cluster. The region spanning 63 to 279 (WSKRHATFMI…ETIAKSKGFL (217 aa)) is the Radical SAM core domain.

The protein belongs to the radical SAM superfamily. Lipoyl synthase family. [4Fe-4S] cluster is required as a cofactor.

It localises to the cytoplasm. It carries out the reaction [[Fe-S] cluster scaffold protein carrying a second [4Fe-4S](2+) cluster] + N(6)-octanoyl-L-lysyl-[protein] + 2 oxidized [2Fe-2S]-[ferredoxin] + 2 S-adenosyl-L-methionine + 4 H(+) = [[Fe-S] cluster scaffold protein] + N(6)-[(R)-dihydrolipoyl]-L-lysyl-[protein] + 4 Fe(3+) + 2 hydrogen sulfide + 2 5'-deoxyadenosine + 2 L-methionine + 2 reduced [2Fe-2S]-[ferredoxin]. The protein operates within protein modification; protein lipoylation via endogenous pathway; protein N(6)-(lipoyl)lysine from octanoyl-[acyl-carrier-protein]: step 2/2. Catalyzes the radical-mediated insertion of two sulfur atoms into the C-6 and C-8 positions of the octanoyl moiety bound to the lipoyl domains of lipoate-dependent enzymes, thereby converting the octanoylated domains into lipoylated derivatives. This is Lipoyl synthase from Pelagibacter ubique (strain HTCC1062).